A 141-amino-acid polypeptide reads, in one-letter code: Large ribosomal subunit protein uL11 (141 aa).

Belongs to the universal ribosomal protein uL11 family. As to quaternary structure, part of the ribosomal stalk of the 50S ribosomal subunit. Interacts with L10 and the large rRNA to form the base of the stalk. L10 forms an elongated spine to which L12 dimers bind in a sequential fashion forming a multimeric L10(L12)X complex. Post-translationally, one or more lysine residues are methylated.

Forms part of the ribosomal stalk which helps the ribosome interact with GTP-bound translation factors. The protein is Large ribosomal subunit protein uL11 of Tropheryma whipplei (strain TW08/27) (Whipple's bacillus).